Reading from the N-terminus, the 214-residue chain is MLDREGFRPNVGIILLNARNEVFWGKRLREHSWQFPQGGIKYGETPMQAMYRELHEETGLHPEHVKIIGRTRDWLRYEVPDKFIKREVRGHYRGQKQIWFLLRMVGRDCDICLRATDHPEFDAWRWNEYWVPLDAVIEFKRDVYQLALTELSRFLRRPAQRAEKPRGPRVSRYPRVIGAQAQTLTIVDTSVVCSEIEVEASTLDEMPPHVIVGK.

The 144-residue stretch at G6–T149 folds into the Nudix hydrolase domain. Residues G38 to G59 carry the Nudix box motif.

Belongs to the Nudix hydrolase family. RppH subfamily. It depends on a divalent metal cation as a cofactor.

Accelerates the degradation of transcripts by removing pyrophosphate from the 5'-end of triphosphorylated RNA, leading to a more labile monophosphorylated state that can stimulate subsequent ribonuclease cleavage. The polypeptide is RNA pyrophosphohydrolase (Burkholderia cenocepacia (strain HI2424)).